The sequence spans 150 residues: UPF0178 protein Shewmr4_1560 (150 aa).

It belongs to the UPF0178 family.

In Shewanella sp. (strain MR-4), this protein is UPF0178 protein Shewmr4_1560.